The following is a 105-amino-acid chain: Zinc metalloproteinase/disintegrin (105 aa).

The region spanning 1–3 is the Peptidase M12B domain; it reads DEP. Positions 11-96 constitute a Disintegrin domain; that stretch reads PPVCGNYFVE…AECTDRFQRN (86 aa). Disulfide bonds link Cys25/Cys43, Cys27/Cys38, Cys37/Cys60, Cys51/Cys57, Cys56/Cys82, and Cys69/Cys89. A D/ECD-tripeptide motif is present at residues 75–77; that stretch reads ECD. Positions 99 to 105 are excised as a propeptide; that stretch reads PCQNNNG.

Belongs to the venom metalloproteinase (M12B) family. P-III subfamily. In terms of assembly, monomer. Zn(2+) is required as a cofactor. Expressed by the venom gland.

It is found in the secreted. In terms of biological role, impairs hemostasis in the envenomed animal. Inhibits platelet aggregation induced by ADP, thrombin, platelet-activating factor and collagen. Acts by inhibiting fibrinogen interaction with platelet receptors GPIIb/GPIIIa (ITGA2B/ITGB3). This is Zinc metalloproteinase/disintegrin from Gloydius brevicauda (Korean slamosa snake).